The primary structure comprises 408 residues: UPF0761 membrane protein NMC0462 (408 aa).

6 helical membrane passes run 43–63 (LLALVPVLTVMVAVASIFPVF), 100–120 (LTAIGSVMLVVTSLMLIRTID), 139–159 (FLVYWALLTFGPLSLGVGISF), 176–196 (WSGALRTAATLTFMTLLLWGL), 210–230 (AFVGALATAFCLETARSLFTW), and 248–268 (VPFFLLWLNLLWTLVLGGAVL).

This sequence belongs to the UPF0761 family.

Its subcellular location is the cell inner membrane. This chain is UPF0761 membrane protein NMC0462, found in Neisseria meningitidis serogroup C / serotype 2a (strain ATCC 700532 / DSM 15464 / FAM18).